The primary structure comprises 206 residues: Transmembrane emp24 domain-containing protein bai (206 aa).

An N-terminal signal peptide occupies residues 1 to 20; the sequence is MMKAILATLAIFGCIWPGQS. The Lumenal portion of the chain corresponds to 21-172; the sequence is VMFHLTPNTQ…RDTNEKTNSR (152 aa). Positions 30–140 constitute a GOLD domain; the sequence is QKCLKEDIQA…LKPLEVDLKR (111 aa). Residues 173–193 traverse the membrane as a helical segment; that stretch reads VLFFSIFSMCCLLGLATWQVL. At 194-206 the chain is on the cytoplasmic side; the sequence is YLRRYFKAKKLIE.

It belongs to the EMP24/GP25L family.

Its subcellular location is the membrane. Its function is as follows. Eca and bai are essential, though not redundant, for dorsoventral patterning of the embryo. Specifically required during early embryogenesis for the activity of maternal tkv, while the zygotic tkv is not affected. In Drosophila willistoni (Fruit fly), this protein is Transmembrane emp24 domain-containing protein bai.